We begin with the raw amino-acid sequence, 423 residues long: Autophagy-related protein 18 (423 aa).

WD repeat units lie at residues 200–240 (AHKT…KLWQ) and 245–284 (SSSA…KGGK). The short motif at 241–245 (FRRGS) is the L/FRRG motif element. A disordered region spans residues 281–317 (KGGKDADDASTEEARSPTPSETPLASSPPLAAGKLDS). Over residues 282–295 (GGKDADDASTEEAR) the composition is skewed to basic and acidic residues.

It belongs to the WD repeat PROPPIN family. As to quaternary structure, component of the PI(3,5)P2 regulatory complex.

The protein resides in the preautophagosomal structure membrane. Its subcellular location is the vacuole membrane. It is found in the endosome membrane. In terms of biological role, the PI(3,5)P2 regulatory complex regulates both the synthesis and turnover of phosphatidylinositol 3,5-bisphosphate (PtdIns(3,5)P2). Necessary for proper vacuole morphology. Plays an important role in osmotically-induced vacuole fragmentation. Required for cytoplasm to vacuole transport (Cvt) vesicle formation, pexophagy and starvation-induced autophagy. Involved in correct ATG9 trafficking to the pre-autophagosomal structure. Might also be involved in premeiotic DNA replication. This chain is Autophagy-related protein 18 (ATG18), found in Cryptococcus neoformans var. neoformans serotype D (strain JEC21 / ATCC MYA-565) (Filobasidiella neoformans).